Here is a 365-residue protein sequence, read N- to C-terminus: tRNA N6-adenosine threonylcarbamoyltransferase (365 aa).

Positions 111 and 115 each coordinate Fe cation. Substrate contacts are provided by residues 140–144 (IVSGG), Asp-173, Gly-186, and Asn-298. Residue Asp-323 participates in Fe cation binding.

The protein belongs to the KAE1 / TsaD family. The cofactor is Fe(2+).

The protein localises to the cytoplasm. The enzyme catalyses L-threonylcarbamoyladenylate + adenosine(37) in tRNA = N(6)-L-threonylcarbamoyladenosine(37) in tRNA + AMP + H(+). Functionally, required for the formation of a threonylcarbamoyl group on adenosine at position 37 (t(6)A37) in tRNAs that read codons beginning with adenine. Is involved in the transfer of the threonylcarbamoyl moiety of threonylcarbamoyl-AMP (TC-AMP) to the N6 group of A37, together with TsaE and TsaB. TsaD likely plays a direct catalytic role in this reaction. In Thermomicrobium roseum (strain ATCC 27502 / DSM 5159 / P-2), this protein is tRNA N6-adenosine threonylcarbamoyltransferase.